Consider the following 421-residue polypeptide: Ameloblastin (421 aa).

The N-terminal stretch at Met1–Ala26 is a signal peptide. Pro37 bears the Hydroxyproline mark. A Phosphoserine modification is found at Ser43. Disordered regions lie at residues Pro104–Phe126, Gly264–Glu311, and Gly333–Pro421. Ser112 carries an O-linked (GalNAc...) serine glycan. Over residues Gln113–Pro125 the composition is skewed to low complexity. Residues Ala339–Pro350 are compositionally biased toward low complexity. The span at Met388–Gln410 shows a compositional bias: polar residues. The span at Ile411–Pro421 shows a compositional bias: basic and acidic residues.

This sequence belongs to the ameloblastin family. As to expression, ameloblast-specific. Located at the Tomes processes of secretory ameloblasts and in the sheath space between rod-interrod enamel.

It is found in the secreted. Its subcellular location is the extracellular space. It localises to the extracellular matrix. Involved in the mineralization and structural organization of enamel. The protein is Ameloblastin (AMBN) of Sus scrofa (Pig).